A 240-amino-acid chain; its full sequence is Splicing factor U2AF 35 kDa subunit (240 aa).

Ala2 bears the N-acetylalanine mark. Residues 12-40 form a C3H1-type 1 zinc finger; the sequence is EKDKVNCSFYFKIGACRHGDRCSRLHNKP. Lys39 carries the N6-methyllysine modification. A phosphoserine mark is found at Ser61 and Ser145. Residues 65–147 form the RRM domain; it reads LRCAVSDVEM…QPIHAELSPV (83 aa). The C3H1-type 2 zinc finger occupies 149-176; it reads DFREACCRQYEMGECTRGGFCNFMHLKP. Position 165 is an omega-N-methylarginine (Arg165). The tract at residues 183 to 240 is disordered; the sequence is RELYGRRRKKHRSRSRSRERRSRSRDRGRGGGGGGGGGGGGRERDRRRSRDRERSGRF. Basic residues predominate over residues 188 to 208; sequence RRRKKHRSRSRSRERRSRSRD. Gly residues predominate over residues 212-222; that stretch reads GGGGGGGGGGG. A compositionally biased stretch (basic and acidic residues) spans 223–240; that stretch reads GRERDRRRSRDRERSGRF.

Belongs to the splicing factor SR family. In terms of assembly, identified in the spliceosome C complex. Heterodimer with U2AF2. Interacts (via RS domain) with PHF5A (via N-terminus). Interacts with ZRANB2. Interacts with SDE2. Interacts with SF3B1.

The protein resides in the nucleus. Its subcellular location is the nucleus speckle. Plays a critical role in both constitutive and enhancer-dependent splicing by mediating protein-protein interactions and protein-RNA interactions required for accurate 3'-splice site selection. Recruits U2 snRNP to the branch point. Directly mediates interactions between U2AF2 and proteins bound to the enhancers and thus may function as a bridge between U2AF2 and the enhancer complex to recruit it to the adjacent intron. This is Splicing factor U2AF 35 kDa subunit (U2AF1) from Homo sapiens (Human).